The following is a 270-amino-acid chain: Small ribosomal subunit protein uS2 (270 aa).

Belongs to the universal ribosomal protein uS2 family. Component of the small ribosomal subunit. Mature ribosomes consist of a small (40S) and a large (60S) subunit. The 40S subunit contains about 33 different proteins and 1 molecule of RNA (18S). The 60S subunit contains about 49 different proteins and 3 molecules of RNA (28S, 5.8S and 5S). Interacts with oho23B/rpS21.

It is found in the cytoplasm. The protein resides in the nucleus. Functionally, required for the assembly and/or stability of the 40S ribosomal subunit. Required for the processing of the 20S rRNA-precursor to mature 18S rRNA in a late step of the maturation of 40S ribosomal subunits. Required during oogenesis and imaginal development. This chain is Small ribosomal subunit protein uS2, found in Drosophila persimilis (Fruit fly).